The sequence spans 414 residues: NADH kinase POS5, mitochondrial (414 aa).

Belongs to the NAD kinase family.

Its subcellular location is the mitochondrion matrix. The enzyme catalyses NADH + ATP = ADP + NADPH + H(+). Its function is as follows. Phosphorylates both NADH and NAD(+), with a twofold preference for NADH. Anti-oxidant factor and key source of the cellular reductant NADPH. The polypeptide is NADH kinase POS5, mitochondrial (POS5) (Saccharomyces cerevisiae (strain ATCC 204508 / S288c) (Baker's yeast)).